Here is a 156-residue protein sequence, read N- to C-terminus: Putative pre-16S rRNA nuclease (156 aa).

Belongs to the YqgF nuclease family.

Its subcellular location is the cytoplasm. Could be a nuclease involved in processing of the 5'-end of pre-16S rRNA. The chain is Putative pre-16S rRNA nuclease from Ehrlichia chaffeensis (strain ATCC CRL-10679 / Arkansas).